Consider the following 151-residue polypeptide: Natriuretic peptides A (151 aa).

The N-terminal stretch at Met-1–Ala-25 is a signal peptide. Residues Val-62–Ser-105 form a disordered region. The propeptide occupies Asp-93–Asp-103. Ser-129 carries the post-translational modification Phosphoserine. Cysteines 130 and 146 form a disulfide. Residues Asn-147 to Tyr-151 form an important for degradation of atrial natriuretic peptide by IDE region.

It belongs to the natriuretic peptide family. Homodimer; disulfide-linked antiparallel dimer. In terms of processing, the precursor molecule is proteolytically cleaved by CORIN at Arg-123 to produce atrial natriuretic peptide. Undergoes further proteolytic cleavage by unknown proteases to give rise to long-acting natriuretic peptide, vessel dilator and kaliuretic peptide. Additional processing gives rise to the auriculin and atriopeptin peptides. In the kidneys, alternative processing by an unknown protease results in the peptide urodilatin. Cleavage by MME initiates degradation of the factor and thereby regulates its activity. Degraded by IDE (in vitro). During IDE degradation, the resulting products can temporarily stimulate NPR2 to produce cGMP, before the fragments are completely degraded and inactivated by IDE (in vitro). Post-translationally, degraded by IDE. In terms of processing, phosphorylation on Ser-129 decreases vasorelaxant activity. Detected in the kidney distal tubular cells (at protein level). Present in urine (at protein level). In terms of tissue distribution, detected in atrial and ventricular plasma samples, and in adipocytes (at protein level). Detected in urine in one study. However, was not detected in urine in another study. In the brain, predominantly expressed in the gray matter with very weak expression in the white matter (at protein level). Localizes to astrocyte-like structures throughout the white matter, and in the cerebral vessels detected in the leptomeningeal and parenchymal vessels, and endothelium and smooth muscle layers (at protein level). Relatively low levels of expression in the kidneys compared to urodilatin (at protein level).

The protein resides in the secreted. It localises to the perikaryon. Its subcellular location is the cell projection. Hormone that plays a key role in mediating cardio-renal homeostasis, and is involved in vascular remodeling and regulating energy metabolism. Acts by specifically binding and stimulating NPR1 to produce cGMP, which in turn activates effector proteins, such as PRKG1, that drive various biological responses. Regulates vasodilation, natriuresis, diuresis and aldosterone synthesis and is therefore essential for regulating blood pressure, controlling the extracellular fluid volume and maintaining the fluid-electrolyte balance. Also involved in inhibiting cardiac remodeling and cardiac hypertrophy by inducing cardiomyocyte apoptosis and attenuating the growth of cardiomyocytes and fibroblasts. Plays a role in female pregnancy by promoting trophoblast invasion and spiral artery remodeling in uterus, and thus prevents pregnancy-induced hypertension. In adipose tissue, acts in various cGMP- and PKG-dependent pathways to regulate lipid metabolism and energy homeostasis. This includes up-regulating lipid metabolism and mitochondrial oxygen utilization by activating the AMP-activated protein kinase (AMPK), and increasing energy expenditure by acting via MAPK11 to promote the UCP1-dependent thermogenesis of brown adipose tissue. Binds the clearance receptor NPR3 which removes the hormone from circulation. In terms of biological role, may have a role in cardio-renal homeostasis through regulation of natriuresis, diuresis, vasodilation, and inhibiting aldosterone synthesis. In vitro, promotes the production of cGMP and induces vasodilation. May promote natriuresis, at least in part, by enhancing prostaglandin E2 synthesis resulting in the inhibition of renal Na+-K+-ATPase. However reports on the involvement of this peptide in mammal blood volume and blood pressure homeostasis are conflicting; according to a report, in vivo it is not sufficient to activate cGMP and does not inhibit collecting duct transport nor effect diuresis and natriuresis. Appears to bind to specific receptors that are distinct from the receptors bound by atrial natriuretic peptide and vessel dilator. Possibly enhances protein excretion in urine by decreasing proximal tubular protein reabsorption. Its function is as follows. May have a role in cardio-renal homeostasis through regulation of natriuresis, diuresis, and vasodilation. In vitro, promotes the production of cGMP and induces vasodilation. May promote natriuresis, at least in part, by enhancing prostaglandin E2 synthesis resulting in the inhibition of renal Na+-K+-ATPase. However reports on the involvement of this peptide in mammal blood volume and blood pressure homeostasis are conflicting; according to a report it is not sufficient to activate cGMP and does not inhibit collecting duct transport nor effect diuresis and natriuresis. Appears to bind to specific receptors that are distinct from the receptors bound by the atrial natriuretic and long-acting natriuretic peptides. Possibly functions in protein excretion in urine by maintaining the integrity of the proximal tubules and enhancing protein excretion by decreasing proximal tubular protein reabsorption. Functionally, may have a role in cardio-renal homeostasis through regulation of diuresis and inhibiting aldosterone synthesis. In vitro, promotes the production of cGMP and induces vasodilation. May promote natriuresis, at least in part, by enhancing prostaglandin E2 synthesis resulting in the inhibition of renal Na+-K+-ATPase. May have a role in potassium excretion but not sodium excretion (natriuresis). Possibly enhances protein excretion in urine by decreasing proximal tubular protein reabsorption. Hormone produced in the kidneys that appears to be important for maintaining cardio-renal homeostasis. Mediates vasodilation, natriuresis and diuresis primarily in the renal system, in order to maintain the extracellular fluid volume and control the fluid-electrolyte balance. Specifically binds and stimulates cGMP production by renal transmembrane receptors, likely NPR1. Urodilatin not ANP, may be the natriuretic peptide responsible for the regulation of sodium and water homeostasis in the kidney. In terms of biological role, may have a role in cardio-renal homeostasis through regulation of natriuresis and vasodilation. In vivo promotes natriuresis and in vitro, vasodilates renal artery strips. Its function is as follows. May have a role in cardio-renal homeostasis through regulation of regulation of natriuresis and vasodilation. In vivo promotes natriuresis. In vitro, vasodilates intestinal smooth muscle but not smooth muscle strips. Functionally, may have a role in cardio-renal homeostasis through regulation of natriuresis and vasodilation. In vivo promotes natriuresis. In vitro, selectively vasodilates intestinal and vascular smooth muscle strips. May have a role in cardio-renal homeostasis through regulation of natriuresis and vasodilation. In vivo promotes natriuresis. In vitro, selectively vasodilates intestinal smooth muscle but not vascular smooth muscle strips. The protein is Natriuretic peptides A (NPPA) of Homo sapiens (Human).